A 445-amino-acid polypeptide reads, in one-letter code: UPF0210 protein STER_0157 (445 aa).

It belongs to the UPF0210 family. Homodimer.

This Streptococcus thermophilus (strain ATCC BAA-491 / LMD-9) protein is UPF0210 protein STER_0157.